A 391-amino-acid chain; its full sequence is Alkanesulfonate monooxygenase (391 aa).

This sequence belongs to the SsuD family.

The enzyme catalyses an alkanesulfonate + FMNH2 + O2 = an aldehyde + FMN + sulfite + H2O + 2 H(+). In terms of biological role, catalyzes the desulfonation of aliphatic sulfonates. The chain is Alkanesulfonate monooxygenase from Methylorubrum extorquens (strain CM4 / NCIMB 13688) (Methylobacterium extorquens).